The sequence spans 366 residues: Chorismate synthase (366 aa).

NADP(+) contacts are provided by R48 and R54. FMN-binding positions include 125 to 127 (RSS), 238 to 239 (NA), G278, 293 to 297 (KPTSS), and R319.

This sequence belongs to the chorismate synthase family. Homotetramer. FMNH2 serves as cofactor.

The enzyme catalyses 5-O-(1-carboxyvinyl)-3-phosphoshikimate = chorismate + phosphate. Its pathway is metabolic intermediate biosynthesis; chorismate biosynthesis; chorismate from D-erythrose 4-phosphate and phosphoenolpyruvate: step 7/7. Catalyzes the anti-1,4-elimination of the C-3 phosphate and the C-6 proR hydrogen from 5-enolpyruvylshikimate-3-phosphate (EPSP) to yield chorismate, which is the branch point compound that serves as the starting substrate for the three terminal pathways of aromatic amino acid biosynthesis. This reaction introduces a second double bond into the aromatic ring system. This is Chorismate synthase from Pseudoalteromonas atlantica (strain T6c / ATCC BAA-1087).